Reading from the N-terminus, the 391-residue chain is Multidrug resistance protein MdtL (391 aa).

Transmembrane regions (helical) follow at residues 4-24 (FLICSFALVLLYPAGIDMYLV), 42-62 (IAFSVYLAGMAAAMLFAGKVA), 69-89 (PVAIPGAALFIIASVFCSLAE), 93-113 (LFLAGRFLQGLGAGCCYVVAF), 131-151 (LLNGITCIIPVLAPVLGHLIM), 158-178 (SLFWTMATMGIALLMLSLFIL), 203-222 (FFLSRVVITTLSVSVILTFV), 245-265 (ALTAGVSMTVSFSTPFALGIF), 269-289 (TLMITSQVLFLAAGITLAVSP), 293-313 (VSLFGITLICAGFSVGFGVAM), 331-351 (LGIAQVCGSSLWIWLAAVVGI), and 356-376 (MLIGILIACSIVSLLLIMFVA).

It belongs to the major facilitator superfamily. DHA1 family. MdtL (TC 2.A.1.2.22) subfamily.

Its subcellular location is the cell inner membrane. Confers resistance to chloramphenicol. In Escherichia coli O45:K1 (strain S88 / ExPEC), this protein is Multidrug resistance protein MdtL.